The following is a 765-amino-acid chain: uncharacterized protein (765 aa).

Disordered stretches follow at residues 9–61, 128–164, 265–289, 301–373, 409–526, 540–560, and 668–765; these read NDGN…PSSV, QQQQ…NYTS, TTSS…NITT, WTTT…TYIQ, IGNN…NQSN, PTKK…KYSE, and NSNT…KSRI. Composition is skewed to low complexity over residues 40-61 and 143-161; these read SNNI…PSSV and SNKS…NNNN. 7 stretches are compositionally biased toward low complexity: residues 301–311, 325–344, 353–373, 414–428, 438–485, 495–504, and 513–526; these read WTTTKPTSSTK, YDSP…STSS, IQPT…TYIQ, SNHT…SLST, NNNN…INNN, DNQSSYSSPD, and SQQQ…NQSN. The segment covering 668-745 has biased composition (low complexity); the sequence is NSNTDNYNYY…NNSRNNYNNN (78 aa).

This is an uncharacterized protein from Dictyostelium discoideum (Social amoeba).